We begin with the raw amino-acid sequence, 708 residues long: Pre-mRNA-splicing factor SPP382 (708 aa).

Residues 61–108 (TYGIGAKLLSSMGYVAGKGLGKDGSGITTPIETQSRPMHNAGLGMFSN) form the G-patch domain.

As to quaternary structure, component of the NTR complex (NTC-related complex), composed of NTR1, NTR2 and PRP43. Interacts with CLF1 and NTR2. Interacts with PRP43 and PRP45.

Its subcellular location is the cytoplasm. The protein resides in the nucleus. Its function is as follows. Involved in pre-mRNA splicing and spliceosome disassembly. Promotes release of excised lariat intron from the spliceosome by acting as a receptor for PRP43. This targeting of PRP43 leads to disassembly of the spliceosome with the separation of the U2, U5, U6 snRNPs and the NTC complex. The chain is Pre-mRNA-splicing factor SPP382 (SPP382) from Saccharomyces cerevisiae (strain ATCC 204508 / S288c) (Baker's yeast).